A 422-amino-acid polypeptide reads, in one-letter code: Serine protease HTRA2, mitochondrial (422 aa).

A mitochondrion-targeting transit peptide spans 1–17 (MALRGCHRLEVIFKRCI). Residues 18 to 74 (ASPVLHSQAGNRRSSQLAIKGVDPNSNGNSGQYQQNGEHKEKGWRRLVRFFVPFSLG) constitute a propeptide that is removed on maturation. The tract at residues 33–55 (QLAIKGVDPNSNGNSGQYQQNGE) is disordered. Residues 42–53 (NSNGNSGQYQQN) show a composition bias toward low complexity. Residues 64-82 (LVRFFVPFSLGAAVSAAII) form a helical membrane-spanning segment. Short sequence motifs (IAP-binding) lie at residues 75-78 (AAVS) and 94-97 (SKMT). The segment at 139-302 (SNGSGFIIEQ…IPIDYVKVFL (164 aa)) is serine protease. Residues histidine 157, aspartate 189, and serine 266 each act as charge relay system in the active site. A PDZ domain is found at 325–410 (MGITMLTLTP…TLDIVILRGV (86 aa)).

Belongs to the peptidase S1C family. As to quaternary structure, interacts with th/DIAP1 (via BIR 2 domain).

The protein resides in the mitochondrion intermembrane space. It localises to the mitochondrion membrane. The enzyme catalyses Cleavage of non-polar aliphatic amino-acids at the P1 position, with a preference for Val, Ile and Met. At the P2 and P3 positions, Arg is selected most strongly with a secondary preference for other hydrophilic residues.. In terms of biological role, serine protease that shows proteolytic activity against a non-specific substrate beta-casein. Promotes or induces cell death either by direct binding to and inhibition of BIRC proteins (also called inhibitor of apoptosis proteins, IAPs), leading to an increase in caspase activity, or by a BIRC inhibition-independent, caspase-independent and serine protease activity-dependent mechanism. Can antagonize antiapoptotic activity of th/Diap1 by directly inducing the degradation of th/Diap1. The polypeptide is Serine protease HTRA2, mitochondrial (Drosophila simulans (Fruit fly)).